The sequence spans 1178 residues: Thrombospondin-2 (1178 aa).

A signal peptide spans 1–22; that stretch reads MLQRSRLLWLAVFITLWVSSDA. One can recognise a Laminin G-like domain in the interval 25–221; that stretch reads DAKEEENTFD…LQNIHLIFDT (197 aa). Residues Asn157, Asn244, Asn317, and Asn322 are each glycosylated (N-linked (GlcNAc...) asparagine). One can recognise a VWFC domain in the interval 324 to 381; the sequence is SVCWQDGRVFADSESWIVDSCTKCTCQDSKIVCHQITCPPVSCADPSFIEGECCPVCS. TSP type-1 domains are found at residues 387–437, 443–498, and 500–555; these read EEGW…KKCD, DGGW…APCP, and NGQW…RDCP. Intrachain disulfides connect Cys399/Cys431, Cys403/Cys436, Cys414/Cys421, Cys455/Cys492, Cys459/Cys497, Cys470/Cys482, Cys512/Cys549, Cys516/Cys554, Cys527/Cys539, Cys559/Cys570, Cys564/Cys580, Cys583/Cys594, Cys600/Cys616, Cys607/Cys625, Cys628/Cys652, Cys658/Cys671, Cys665/Cys684, Cys686/Cys697, Cys713/Cys721, Cys726/Cys746, Cys762/Cys782, Cys785/Cys805, Cys821/Cys841, Cys844/Cys864, Cys882/Cys902, Cys918/Cys938, and Cys954/Cys1175. Asn463 is a glycosylation site (N-linked (GlcNAc...) asparagine). The EGF-like 1 domain occupies 555-595; that stretch reads PIDGCLSNPCFPGAECNSYPDGSWSCGPCPAGFLGNGTVCE. Asn590 is a glycosylation site (N-linked (GlcNAc...) asparagine). The 45-residue stretch at 654 to 698 folds into the EGF-like 2 domain; that stretch reads PENPCKDKTHSCHKSAECIYLGHFSDPMYKCECRTGYAGDGRICG. 8 TSP type-3 repeats span residues 699-734, 735-770, 771-793, 794-829, 830-852, 853-890, 891-926, and 927-962; these read EDSD…NSGQ, EDFD…NPRQ, FDYD…NPAQ, IDTD…NTDQ, SDTD…NPDQ, TDAD…NANQ, ADHD…NPEQ, and EDSD…AISE. Asn716 is a glycosylation site (N-linked (GlcNAc...) asparagine). The segment at 737 to 760 is disordered; sequence FDKDGKGDACDEDDDNDGVEDDKD. A compositionally biased stretch (acidic residues) spans 746 to 759; it reads CDEDDDNDGVEDDK. Residues 852–941 form a disordered region; that stretch reads QTDADNDLVG…DGRGDICKDD (90 aa). Residues 853-872 are compositionally biased toward acidic residues; that stretch reads TDADNDLVGDQCDNNEDIDE. A compositionally biased stretch (basic and acidic residues) spans 891–901; that stretch reads ADHDKDGKGDA. The segment covering 902–911 has biased composition (acidic residues); sequence CDPDDDNDGI. Basic and acidic residues-rich tracts occupy residues 912 to 924 and 931 to 940; these read PDDR…RYNP and GDGRGDICKD. Residues 934-936 carry the Cell attachment site motif; sequence RGD. The TSP C-terminal domain maps to 966 to 1178; it reads RKFQMVPLDP…SDLKYECRDA (213 aa). An N-linked (GlcNAc...) asparagine glycan is attached at Asn1075.

The protein belongs to the thrombospondin family. In terms of assembly, homotrimer; disulfide-linked. Can bind to fibrinogen, fibronectin, laminin and type V collagen.

Functionally, adhesive glycoprotein that mediates cell-to-cell and cell-to-matrix interactions. This is Thrombospondin-2 (THBS2) from Gallus gallus (Chicken).